The sequence spans 490 residues: Tegument protein VP16 (490 aa).

Positions 11–35 (DADGVSPPPPRPAGGPKNTPAAPPL) are disordered. Residues S16, S351, S411, and S453 each carry the phosphoserine modification. The tract at residues 411 to 490 (STTAPITDVS…DAMGIDDFGG (80 aa)) is transcriptional activation.

This sequence belongs to the herpesviridae tegument protein VP16 protein family. Interacts with VP22. Interacts with gH (via C-terminus). Interacts with the virion host shutoff protein (vhs). Interacts with VP11/12. Associates with the VP16-induced complex; binding to host HCFC1 activates VP16 for association with the octamer motif-binding host protein POU2F1, to form a multiprotein-DNA complex responsible for activating transcription of the viral immediate early genes.

It is found in the virion tegument. The protein resides in the host nucleus. Its function is as follows. Transcriptional activator of immediate-early (IE) gene products (alpha genes). Acts as a key activator of lytic infection by initiating the lytic program through the assembly of the transcriptional regulatory VP16-induced complex composed of VP16 and two cellular factors, HCFC1 and POU2F 1. VP16-induced complex represents a regulatory switch: when it is on, it promotes IE-gene expression and thus lytic infection, and when it is off, it limits IE-gene transcription favoring latent infection. May play a role in the aggregation of tegument proteins around nucleocapsids during virus morphogenesis. The protein is Tegument protein VP16 of Human herpesvirus 2 (strain 333) (HHV-2).